Consider the following 249-residue polypeptide: Metallo-beta-lactamase type 2 (249 aa).

The N-terminal stretch at 1–22 (MLKRLKGLLVLALGFTGLQVFG) is a signal peptide. Residues His98, His100, Asp102, His161, and Cys180 each contribute to the Zn(2+) site. Substrate is bound at residue Lys183. His222 contributes to the Zn(2+) binding site.

It belongs to the metallo-beta-lactamase superfamily. Class-B beta-lactamase family. Monomer. It depends on Zn(2+) as a cofactor.

It localises to the periplasm. It carries out the reaction a beta-lactam + H2O = a substituted beta-amino acid. Its function is as follows. Confers resistance to the different beta-lactams antibiotics (penicillin, cephalosporin and carbapenem) via the hydrolysis of the beta-lactam ring. The sequence is that of Metallo-beta-lactamase type 2 (blaB5) from Elizabethkingia meningoseptica (Chryseobacterium meningosepticum).